The following is a 519-amino-acid chain: Matrix metalloproteinase-B (519 aa).

The first 26 residues, 1–26 (MTKWSPNGNPLSTIYLILSLFTLAHT), serve as a signal peptide directing secretion. The propeptide at 27–126 (APTTQHSRTT…RQEQTKRTKR (100 aa)) is activation peptide. A compositionally biased stretch (polar residues) spans 29-39 (TTQHSRTTTQL). The segment at 29-50 (TTQHSRTTTQLRLEDEDGGGGV) is disordered. The short motif at 109-116 (PRCTQTDV) is the Cysteine switch element. Residues cysteine 111, histidine 208, aspartate 210, histidine 232, histidine 247, and histidine 276 each coordinate Zn(2+). Glutamate 277 is a catalytic residue. The Zn(2+) site is built by histidine 280 and histidine 286. N-linked (GlcNAc...) asparagine glycosylation occurs at asparagine 341. The segment covering 391–402 (KDKRSYRGDSKI) has biased composition (basic and acidic residues). A disordered region spans residues 391–410 (KDKRSYRGDSKIPKCSSNNS). Asparagine 408 is a glycosylation site (N-linked (GlcNAc...) asparagine).

The protein belongs to the peptidase M10A family. It depends on Zn(2+) as a cofactor. In terms of tissue distribution, expressed in spermatheca and spermathecal-uterine valve, weakly in vulva and anal muscles and in two cells in the head (probably RMEV and RMED motor neurons).

The protein localises to the secreted. Its subcellular location is the extracellular space. It is found in the extracellular matrix. Inhibited by human TIMP1 and TIMP2 and the broad MMP inhibitors BB94 (Batimastat) and CT543. In terms of biological role, metalloprotease involved in molting, a process during larval stages in which a new cuticle is formed and the old cuticle is shed. Plays a role in thermotolerance probably by preventing the accumulation of oxidized lipoproteins and cholesterol. This Caenorhabditis elegans protein is Matrix metalloproteinase-B.